The following is a 145-amino-acid chain: Cell wall teichoic acid glycosylation protein GtcA (145 aa).

Transmembrane regions (helical) follow at residues 21–41 (ILMY…TFWL), 52–69 (IANT…YFSN), 96–116 (FLTY…LGIN), and 121–141 (KIWT…WIIF).

It belongs to the GtrA family.

The protein resides in the cell membrane. In terms of biological role, involved in the decoration of cell wall teichoic acid with galactose and glucose. The chain is Cell wall teichoic acid glycosylation protein GtcA (gtcA) from Listeria innocua serovar 6a (strain ATCC BAA-680 / CLIP 11262).